The primary structure comprises 431 residues: MLDINFIRQNPEKVSRMLEQRQQREDIAKLNQLLDFDVRRRTMVQRTDELKALRNKVSKDIAVIKRSGQGSADDLIVQMKAVADEISGMDDTLKSLEAQIEELLLSLPNKLHEDVPEGRCADDNHIYREKLSFDHKLDFPLDNHLDLGKRLGILDFERGAKITGAGFPVYTAKGARLERALINFMLDQHTSVNGYTEVLPPLFVNRESLRGTGQWPKFADQVYYMNEDNLYAIPTAEVPLTNMHRDEILDASDIPLAYAAYTPCFRREAGSYGKDTRGFLRVHQFNKVELVRYATPTTSYDALQEILSHAEGILQALKIPYRVLLLCSGDISANATKCYDIEVWAPGEGKFLEASSCSNFEDYQARRANIRYRPEDGGKPTYVHTLNGSGLATSRLMVALLENYQTPEGSIRIPDVLQPYTGFSSIDQAAE.

Position 235–237 (235–237 (TAE)) interacts with L-serine. Residues 266-268 (RRE) and Val-282 each bind ATP. An L-serine-binding site is contributed by Glu-289. 353 to 356 (EASS) is a binding site for ATP. L-serine is bound at residue Ser-389.

It belongs to the class-II aminoacyl-tRNA synthetase family. Type-1 seryl-tRNA synthetase subfamily. Homodimer. The tRNA molecule binds across the dimer.

It is found in the cytoplasm. It catalyses the reaction tRNA(Ser) + L-serine + ATP = L-seryl-tRNA(Ser) + AMP + diphosphate + H(+). The enzyme catalyses tRNA(Sec) + L-serine + ATP = L-seryl-tRNA(Sec) + AMP + diphosphate + H(+). The protein operates within aminoacyl-tRNA biosynthesis; selenocysteinyl-tRNA(Sec) biosynthesis; L-seryl-tRNA(Sec) from L-serine and tRNA(Sec): step 1/1. Catalyzes the attachment of serine to tRNA(Ser). Is also able to aminoacylate tRNA(Sec) with serine, to form the misacylated tRNA L-seryl-tRNA(Sec), which will be further converted into selenocysteinyl-tRNA(Sec). The polypeptide is Serine--tRNA ligase (Prosthecochloris aestuarii (strain DSM 271 / SK 413)).